The following is a 466-amino-acid chain: Cell division protein FtsP (466 aa).

Residues 1-28 constitute a signal peptide (tat-type signal); sequence MGNYSRRRFLQGSLAIVAGNVLPCAAMA.

It belongs to the FtsP family. Predicted to be exported by the Tat system. The position of the signal peptide cleavage has not been experimentally proven.

Its subcellular location is the periplasm. Cell division protein that is required for growth during stress conditions. May be involved in protecting or stabilizing the divisomal assembly under conditions of stress. The chain is Cell division protein FtsP from Gallibacterium anatis (strain UMN179) (Pasteurella anatis).